Here is a 487-residue protein sequence, read N- to C-terminus: MNKFARHFLPLSLRVRFLLATAGVVLVLSLAYGIVALVGYSVSFDKTTFRLLRGESNLFYTLAKWENNKISVELPENLDMQSPTMTLIYDETGKLLWTQRNIPWLIKSIQPEWLKTNGFHEIETNVDATSTLLSEDHSAQEKLKEVREDDDDAEMTHSVAVNIYPATARMPQLTIVVVDTIPIELKRSYMVWSWFVYVLAANLLLVIPLLWIAAWWSLRPIEALAREVRELEDHHREMLNPETTRELTSLVRNLNQLLKSERERYNKYRTTLTDLTHSLKTPLAVLQSTLRSLRNEKMSVSKAEPVMLEQISRISQQIGYYLHRASMRGSGVLLSRELHPVAPLLDNLISALNKVYQRKGVNISMDISPEISFVGEQNDFVEVMGNVLDNACKYCLEFVEISARQTDDHLHIFVEDDGPGIPHSKRSLVFDRGQRADTLRPGQGVGLAVAREITEQYAGQIIASDSLLGGARMEVVFGRQHPTQKEE.

Topologically, residues 1-16 are cytoplasmic; sequence MNKFARHFLPLSLRVR. A helical transmembrane segment spans residues 17-37; it reads FLLATAGVVLVLSLAYGIVAL. Topologically, residues 38–193 are periplasmic; sequence VGYSVSFDKT…ELKRSYMVWS (156 aa). A divalent metal cation is bound by residues aspartate 151 and aspartate 152. The helical transmembrane segment at 194–214 threads the bilayer; it reads WFVYVLAANLLLVIPLLWIAA. Positions 215–266 constitute an HAMP domain; it reads WWSLRPIEALAREVRELEDHHREMLNPETTRELTSLVRNLNQLLKSERERYN. Residues 215 to 487 are Cytoplasmic-facing; that stretch reads WWSLRPIEAL…GRQHPTQKEE (273 aa). The region spanning 274–481 is the Histidine kinase domain; sequence DLTHSLKTPL…RMEVVFGRQH (208 aa). Histidine 277 bears the Phosphohistidine; by autocatalysis mark. Asparagine 386 serves as a coordination point for Mg(2+). ATP contacts are provided by residues 386–394, 416–421, and 435–447; these read NVLDNACKY, DDGPGI, and RADT…GVGL. Glutamine 443 is a binding site for Mg(2+).

In terms of assembly, homodimer.

It localises to the cell inner membrane. The catalysed reaction is ATP + protein L-histidine = ADP + protein N-phospho-L-histidine.. In terms of biological role, member of the two-component regulatory system PhoP/PhoQ which regulates the expression of genes involved in virulence and resistance to host defense antimicrobial peptides. In low periplasmic Mg(2+), PhoQ functions as a membrane-associated protein kinase that undergoes autophosphorylation and subsequently transfers the phosphate to PhoP, which results in the expression of PhoP-activated genes (PAG) and repression of PhoP-repressed genes (PRG). In high periplasmic Mg(2+), acts as a protein phosphatase that dephosphorylates phospho-PhoP, which results in the repression of PAG and may lead to expression of some PRG. In Salmonella paratyphi A (strain ATCC 9150 / SARB42), this protein is Virulence sensor histidine kinase PhoQ (phoQ).